We begin with the raw amino-acid sequence, 701 residues long: Nucleolar transcription factor 1-B (701 aa).

The disordered stretch occupies residues 1 to 21; it reads MNGAAGGDTQGKMTAPKDQDQ. 5 DNA-binding regions (HMG box) span residues 112 to 180, 196 to 264, 298 to 362, 422 to 489, and 508 to 574; these read PKKP…AKFR, PEKP…REYM, TKPP…MRFL, PETP…SDMR, and KKAP…DTWM. The segment at 382 to 426 is disordered; sequence MKRKRTNTPASKMATEDAAKVKSRSGQADKKKAAEERAKLPETPK. The segment covering 408–426 has biased composition (basic and acidic residues); the sequence is QADKKKAAEERAKLPETPK. The tract at residues 584-701 is disordered; it reads AYKEQNTNKR…SADSSDSDSN (118 aa). Polar residues predominate over residues 597–612; sequence TKIQAPSSKSKLVIQS. Positions 615–682 are enriched in acidic residues; sequence DDDEDDEDDE…DNEEDDDDNE (68 aa). Residues 683 to 695 show a composition bias toward low complexity; sequence SGSSSSSSSSADS.

As to quaternary structure, XUBF consists of 2 polypeptides of 82 and 85 kDa, encoded by the same or closely related genes.

Its subcellular location is the nucleus. UBF recognizes the ribosomal RNA gene promotor and activates transcription mediated by RNA polymerase I through cooperative interactions with the species-specific factor SL1. It binds specifically to the upstream control element. This Xenopus laevis (African clawed frog) protein is Nucleolar transcription factor 1-B (ubtf-b).